A 452-amino-acid chain; its full sequence is Serine--tRNA ligase (452 aa).

Residue 251–253 (TSE) participates in L-serine binding. 282-284 (RSE) provides a ligand contact to ATP. Glu-305 contacts L-serine. 369–372 (EISS) contributes to the ATP binding site. Residue Ser-404 participates in L-serine binding.

It belongs to the class-II aminoacyl-tRNA synthetase family. Type-1 seryl-tRNA synthetase subfamily. In terms of assembly, homodimer. The tRNA molecule binds across the dimer.

It is found in the cytoplasm. The catalysed reaction is tRNA(Ser) + L-serine + ATP = L-seryl-tRNA(Ser) + AMP + diphosphate + H(+). The enzyme catalyses tRNA(Sec) + L-serine + ATP = L-seryl-tRNA(Sec) + AMP + diphosphate + H(+). It functions in the pathway aminoacyl-tRNA biosynthesis; selenocysteinyl-tRNA(Sec) biosynthesis; L-seryl-tRNA(Sec) from L-serine and tRNA(Sec): step 1/1. In terms of biological role, catalyzes the attachment of serine to tRNA(Ser). Is also able to aminoacylate tRNA(Sec) with serine, to form the misacylated tRNA L-seryl-tRNA(Sec), which will be further converted into selenocysteinyl-tRNA(Sec). This Albidiferax ferrireducens (strain ATCC BAA-621 / DSM 15236 / T118) (Rhodoferax ferrireducens) protein is Serine--tRNA ligase.